Consider the following 1256-residue polypeptide: MSVLPFVRGVDFTKNDFSATFPSSMRQMSRVQWLTLDRTQLAEIPEELGHLQKLEHLSLNHNRLEKIFGELTELSCLRSLDLRHNQLKNSGIPPELFHLEELTTLDLSHNKLKEVPEGLERAKNLIVLNLSNNQIESIPTPLFIHLTDLLFLDLSHNRLETLPPQTRRLINLKTLDLSHNPLELFQLRQLPSLQSLEVLKMSGTQRTLLNFPTSIDSLANLCELDLSHNSLPKLPDCVYNVVTLVRLNLSDNELTELTAGVELWQRLESLNLSRNQLVALPAALCKLPKLRRLLVNDNKLNFEGIPSGIGKLGALEVFSAANNLLEMVPEGLCRCGALKQLNLSCNRLITLPDAIHLLEGLDQLDLRNNPELVMPPKPSEASKATSLEFYNIDFSLQTQLRLAGAAVPPSMPSSATPKDSTARKIRLRRGPRSEGDQDAAKVLKGMKDVAKDKDNEAGAVPEDGKPESLKPKRWDESLEKPQLDYSKFFEKDDGQLPGLTIWEIENFLPNKIEEVVHGKFYEGDCYIVLKTKFDDLGLLDWEIFFWIGNEATLDKRACAAIHAVNLRNFLGARCRTVREEQGDESEQFLSLFETEVIYIEGGRTATGFYTIEEMIHITRLYLVHAYGATIHLEPVAPAITSLDPRHAFVLDLGTHIYIWMGERSKNTLNSKARLMAEKISKTERKNKCEIQLERQGEESAEFWQGLGMTSEEADAAEPPKEHVPEDYQPVQPRLYQVQLGMGYLELPQVELPEQKLCHTLLNSKHVYILDCYTDLFVWFGKKSTRLVRAAAVKLSRELFNMMDRPDYALVMRVPEGNEMQIFRTKFAGWDEVMAVDFTRTAKSVAKTGANLTQWARQQETRTDLAALFMPRQSAMPLAEAEQLEEEWNYDLEMMEAFVLENKKFVRLPEEELGRFYTGECYVFLCRYCIPIEEPENGSEDGANPAADVSKSSANNQPEDEIQCVVYFWQGRNAGNMGWLTFTFTLQKKFKAMFGEELEVVRIFQQQENLKFMSHFKRKFIIHTGKRKDKAHTAKGKSPVEFFHLRSNGGALTTRLIQINPDAVHLNSTFCYILHVPFETEDDSQSGIVYVWIGSKACNEEAKLVQDIAEQMFNSPWVSLQILNEGDEPENFFWVALGGRKPYDTDAEYMNYTRLFRCSNERGYYTVAEKCADFCQDDLADDDIMILDNGEHVFLWMGPRCSEVEVKLAYKSAQVYIQHMRIKQPERPRKLFLTMKNKESRRFTKCFHGWSAFKVYL.

LRR repeat units follow at residues Leu-4–Met-28, Ser-29–Leu-51, Gln-52–Leu-74, Ser-75–Leu-99, Glu-100–Ala-122, Asn-124–His-145, Thr-147–Leu-169, Asn-171–Ser-192, Leu-218–Val-241, Thr-243–Trp-264, Gln-265–Leu-287, Lys-289–Leu-312, Gly-313–Cys-335, Gly-336–Leu-358, and Gly-360–Ala-381. The interval Ala-405–Glu-476 is disordered. The segment covering Pro-431 to Glu-476 has biased composition (basic and acidic residues). Gelsolin-like repeat units follow at residues Ile-512–Leu-589, Glu-633–Trp-703, Val-749–Phe-822, and Glu-1168–Phe-1242.

The protein belongs to the villin/gelsolin family. Found in ovaries, larval fat bodies, brain and adult thorax.

Its function is as follows. May play a key role in embryonic cellularization by interacting with both the cytoskeleton and other cellular components. Alternatively, it may play a structural role in indirect flight muscle. Vital for embryonic development. The protein is Protein flightless-1 (fliI) of Drosophila melanogaster (Fruit fly).